The primary structure comprises 111 residues: Small ribosomal subunit protein bS16 (111 aa).

Positions 92-111 (EKGVKESNEIVEPEGEEVKE) are disordered. Positions 100 to 111 (EIVEPEGEEVKE) are enriched in acidic residues.

This sequence belongs to the bacterial ribosomal protein bS16 family.

The protein is Small ribosomal subunit protein bS16 of Petrotoga mobilis (strain DSM 10674 / SJ95).